The chain runs to 613 residues: Putative two-component response regulator ARR21 (613 aa).

Positions 17-131 constitute a Response regulatory domain; the sequence is NVMVVDDDHV…DLTKIYQFAL (115 aa). Asp68 carries the 4-aspartylphosphate modification. A compositionally biased stretch (polar residues) spans 178 to 195; sequence KSDSRTVNSTNGSCVSTD. The disordered stretch occupies residues 178-223; that stretch reads KSDSRTVNSTNGSCVSTDGSRKNRKRKPNGGPSDDGESMSQPAKKK. Positions 221 to 224 match the Nuclear localization signal motif; sequence KKKK. Residues 224-274 constitute a DNA-binding region (myb-like GARP); the sequence is KIQWTDSLHDLFLQAIRHIGLDKAVPKKILAFMSVPYLTRENVASHLQKYR.

Belongs to the ARR family. Type-B subfamily. Binds the target DNA as a monomer. Post-translationally, two-component system major event consists of a His-to-Asp phosphorelay between a sensor histidine kinase (HK) and a response regulator (RR). In plants, the His-to-Asp phosphorelay involves an additional intermediate named Histidine-containing phosphotransfer protein (HPt). This multistep phosphorelay consists of a His-Asp-His-Asp sequential transfer of a phosphate group between first a His and an Asp of the HK protein, followed by the transfer to a conserved His of the HPt protein and finally the transfer to an Asp in the receiver domain of the RR protein. Mainly expressed in siliques. Also found in germinating seedlings, stems, flowers and roots, but not in rosette leaves.

It localises to the nucleus. Its function is as follows. Putative transcriptional activator that binds specifically to the DNA sequence 5'-[AG]GATT-3'. Functions as a response regulator involved in His-to-Asp phosphorelay signal transduction system. Phosphorylation of the Asp residue in the receiver domain activates the ability of the protein to promote the transcription of target genes. Could directly activate some type-A response regulators in response to cytokinins. The polypeptide is Putative two-component response regulator ARR21 (ARR21) (Arabidopsis thaliana (Mouse-ear cress)).